We begin with the raw amino-acid sequence, 279 residues long: Large ribosomal subunit protein uL2 (279 aa).

Disordered stretches follow at residues 32–53 (SLLR…TTRH) and 225–279 (AMNP…KKRK). The segment covering 253–268 (KEGRTRHINKPSDKLI) has biased composition (basic and acidic residues). Basic residues predominate over residues 269-279 (VRRRNAGKKRK).

This sequence belongs to the universal ribosomal protein uL2 family. In terms of assembly, part of the 50S ribosomal subunit. Forms a bridge to the 30S subunit in the 70S ribosome.

In terms of biological role, one of the primary rRNA binding proteins. Required for association of the 30S and 50S subunits to form the 70S ribosome, for tRNA binding and peptide bond formation. It has been suggested to have peptidyltransferase activity; this is somewhat controversial. Makes several contacts with the 16S rRNA in the 70S ribosome. The chain is Large ribosomal subunit protein uL2 from Clavibacter michiganensis subsp. michiganensis (strain NCPPB 382).